Reading from the N-terminus, the 309-residue chain is NAD kinase (309 aa).

The Proton acceptor role is filled by Asp-89. NAD(+)-binding positions include 89 to 90 (DG), 163 to 164 (NE), His-174, Arg-191, Asp-193, and 204 to 209 (TAYSLS).

Belongs to the NAD kinase family. A divalent metal cation is required as a cofactor.

Its subcellular location is the cytoplasm. It catalyses the reaction NAD(+) + ATP = ADP + NADP(+) + H(+). Functionally, involved in the regulation of the intracellular balance of NAD and NADP, and is a key enzyme in the biosynthesis of NADP. Catalyzes specifically the phosphorylation on 2'-hydroxyl of the adenosine moiety of NAD to yield NADP. This Shewanella piezotolerans (strain WP3 / JCM 13877) protein is NAD kinase.